A 261-amino-acid polypeptide reads, in one-letter code: Proliferating cell nuclear antigen (261 aa).

3 positions are modified to N6-acetyllysine: Lys14, Lys77, and Lys80. Residues 61–80 (RCDRNLAMGVNLTSMSKILK) mediate DNA binding. The cysteines at positions 135 and 162 are disulfide-linked. A Glycyl lysine isopeptide (Lys-Gly) (interchain with G-Cter in SUMO2); alternate cross-link involves residue Lys164. Lys164 is covalently cross-linked (Glycyl lysine isopeptide (Lys-Gly) (interchain with G-Cter in ubiquitin); alternate). Residue Tyr211 is modified to Phosphotyrosine; by EGFR. Lys248 carries the N6-acetyllysine modification. A Glycyl lysine isopeptide (Lys-Gly) (interchain with G-Cter in SUMO2) cross-link involves residue Lys254.

This sequence belongs to the PCNA family. Homotrimer. Interacts with p300/EP300; the interaction occurs on chromatin in UV-irradiated damaged cells. Interacts with CREBBP (via transactivation domain and C-terminus); the interaction occurs on chromatin in UV-irradiated damaged cells. Directly interacts with POLD1, POLD3 and POLD4 subunits of the DNA polymerase delta complex, POLD3 being the major interacting partner; the interaction with POLD3 is inhibited by CDKN1A/p21(CIP1). Forms a complex with activator 1 heteropentamer in the presence of ATP. Interacts with EXO1, POLH, POLK, DNMT1, ERCC5, FEN1, CDC6 and POLDIP2. Interacts with POLB. Interacts with APEX2; this interaction is triggered by reactive oxygen species and increased by misincorporation of uracil in nuclear DNA. Forms a ternary complex with DNTTIP2 and core histone. Interacts with KCTD10. Interacts with PPP1R15A. Interacts with SMARCA5/SNF2H. Interacts with BAZ1B/WSTF; the interaction is direct and is required for BAZ1B/WSTF binding to replication foci during S phase. Interacts with HLTF and SHPRH. Interacts with NUDT15. Interaction is disrupted in response to UV irradiation and acetylation. Interacts with CDKN1A/p21(CIP1) and CDT1; interacts via their PIP-box which also recruits the DCX(DTL) complex. The interaction with CDKN1A inhibits POLD3 binding. Interacts with DDX11. Interacts with EGFR; positively regulates PCNA. Interacts with PARPBP. Interacts (when ubiquitinated) with SPRTN; leading to enhance RAD18-mediated PCNA ubiquitination. Interacts (when polyubiquitinated) with ZRANB3. Interacts with SMARCAD1. Interacts with CDKN1C. Interacts with PCLAF (via PIP-box). Interacts with RTEL1 (via PIP-box); the interaction is direct and essential for the suppression of telomere fragility. Interacts with FAM111A (via PIP-box); the interaction is direct and required for PCNA loading on chromatin binding. Interacts with LIG1. Interacts with SETMAR. Interacts with ANKRD17. Interacts with FBXO18/FBH1 (via PIP-box); the interaction recruits the DCX(DTL) complex and promotes ubiquitination and degradation of FBXO18/FBH1. Interacts with POLN. Interacts with SDE2 (via PIP-box); the interaction is direct and prevents ultraviolet light induced monoubiquitination. Component of the replisome complex composed of at least DONSON, MCM2, MCM7, PCNA and TICRR; interaction at least with PCNA occurs during DNA replication. Interacts with MAPK15; the interaction is chromatin binding dependent and prevents MDM2-mediated PCNA destruction by inhibiting the association of PCNA with MDM2. Interacts with PARP10 (via PIP-box). Interacts with DDI2. Interacts with HMCES (via PIP-box). Interacts with TRAIP (via PIP-box). Interacts with UHRF2. Interacts with ALKBH2; this interaction is enhanced during the S-phase of the cell cycle. Interacts with ATAD5; the interaction promotes USP1-mediated PCNA deubiquitination. Interacts (when phosphorylated) with GRB2. Interacts with ANG. Interacts with nuclear UNG; this interaction mediates UNG recruitment to S-phase replication foci. Interacts with ERCC6L2 (via an atypical PIP-box); this interaction facilitates cenrtomeric localization of ERCC6L2. Phosphorylated. Phosphorylation at Tyr-211 by EGFR stabilizes chromatin-associated PCNA. Post-translationally, acetylated by CREBBP and p300/EP300; preferentially acetylated by CREBBP on Lys-80, Lys-13 and Lys-14 and on Lys-77 by p300/EP300 upon loading on chromatin in response to UV irradiation. Lysine acetylation disrupts association with chromatin, hence promoting PCNA ubiquitination and proteasomal degradation in response to UV damage in a CREBBP- and EP300-dependent manner. Acetylation disrupts interaction with NUDT15 and promotes degradation. In terms of processing, ubiquitinated. Following DNA damage, can be either monoubiquitinated to stimulate direct bypass of DNA lesions by specialized DNA polymerases or polyubiquitinated to promote recombination-dependent DNA synthesis across DNA lesions by template switching mechanisms. Following induction of replication stress, monoubiquitinated by the UBE2B-RAD18 complex on Lys-164, leading to recruit translesion (TLS) polymerases, which are able to synthesize across DNA lesions in a potentially error-prone manner. An error-free pathway also exists and requires non-canonical polyubiquitination on Lys-164 through 'Lys-63' linkage of ubiquitin moieties by the E2 complex UBE2N-UBE2V2 and the E3 ligases, HLTF, RNF8 and SHPRH. This error-free pathway, also known as template switching, employs recombination mechanisms to synthesize across the lesion, using as a template the undamaged, newly synthesized strand of the sister chromatid. Monoubiquitination at Lys-164 also takes place in undamaged proliferating cells, and is mediated by the DCX(DTL) complex, leading to enhance PCNA-dependent translesion DNA synthesis. Sumoylated during S phase. Methylated on glutamate residues by ARMT1.

It localises to the nucleus. Auxiliary protein of DNA polymerase delta and epsilon, is involved in the control of eukaryotic DNA replication by increasing the polymerase's processibility during elongation of the leading strand. Induces a robust stimulatory effect on the 3'-5' exonuclease and 3'-phosphodiesterase, but not apurinic-apyrimidinic (AP) endonuclease, APEX2 activities. Has to be loaded onto DNA in order to be able to stimulate APEX2. Plays a key role in DNA damage response (DDR) by being conveniently positioned at the replication fork to coordinate DNA replication with DNA repair and DNA damage tolerance pathways. Acts as a loading platform to recruit DDR proteins that allow completion of DNA replication after DNA damage and promote postreplication repair: Monoubiquitinated PCNA leads to recruitment of translesion (TLS) polymerases, while 'Lys-63'-linked polyubiquitination of PCNA is involved in error-free pathway and employs recombination mechanisms to synthesize across the lesion. The polypeptide is Proliferating cell nuclear antigen (Pcna) (Rattus norvegicus (Rat)).